The primary structure comprises 433 residues: Gamma-glutamyl phosphate reductase (433 aa).

This sequence belongs to the gamma-glutamyl phosphate reductase family.

It is found in the cytoplasm. It carries out the reaction L-glutamate 5-semialdehyde + phosphate + NADP(+) = L-glutamyl 5-phosphate + NADPH + H(+). It functions in the pathway amino-acid biosynthesis; L-proline biosynthesis; L-glutamate 5-semialdehyde from L-glutamate: step 2/2. Its function is as follows. Catalyzes the NADPH-dependent reduction of L-glutamate 5-phosphate into L-glutamate 5-semialdehyde and phosphate. The product spontaneously undergoes cyclization to form 1-pyrroline-5-carboxylate. This Cyanothece sp. (strain PCC 7425 / ATCC 29141) protein is Gamma-glutamyl phosphate reductase.